Here is a 448-residue protein sequence, read N- to C-terminus: tRNA-2-methylthio-N(6)-dimethylallyladenosine synthase (448 aa).

Positions 2-119 (KKLYIKTFGC…LSDLIAKRRE (118 aa)) constitute an MTTase N-terminal domain. [4Fe-4S] cluster is bound by residues cysteine 11, cysteine 48, cysteine 82, cysteine 156, cysteine 160, and cysteine 163. One can recognise a Radical SAM core domain in the interval 142–377 (RQTRGSAYVS…LVESQANQIS (236 aa)). Residues 378–444 (QKMLGNIERV…NYTLRGKLVE (67 aa)) form the TRAM domain.

Belongs to the methylthiotransferase family. MiaB subfamily. Monomer. The cofactor is [4Fe-4S] cluster.

The protein localises to the cytoplasm. It catalyses the reaction N(6)-dimethylallyladenosine(37) in tRNA + (sulfur carrier)-SH + AH2 + 2 S-adenosyl-L-methionine = 2-methylsulfanyl-N(6)-dimethylallyladenosine(37) in tRNA + (sulfur carrier)-H + 5'-deoxyadenosine + L-methionine + A + S-adenosyl-L-homocysteine + 2 H(+). Catalyzes the methylthiolation of N6-(dimethylallyl)adenosine (i(6)A), leading to the formation of 2-methylthio-N6-(dimethylallyl)adenosine (ms(2)i(6)A) at position 37 in tRNAs that read codons beginning with uridine. The protein is tRNA-2-methylthio-N(6)-dimethylallyladenosine synthase of Polynucleobacter necessarius subsp. necessarius (strain STIR1).